The primary structure comprises 282 residues: NADPH-dependent 7-cyano-7-deazaguanine reductase (282 aa).

88–90 (IES) lines the substrate pocket. 90-91 (SK) is an NADPH binding site. C190 (thioimide intermediate) is an active-site residue. Catalysis depends on D197, which acts as the Proton donor. 229-230 (HE) contacts substrate. An NADPH-binding site is contributed by 258-259 (RG).

The protein belongs to the GTP cyclohydrolase I family. QueF type 2 subfamily. In terms of assembly, homodimer.

The protein localises to the cytoplasm. It catalyses the reaction 7-aminomethyl-7-carbaguanine + 2 NADP(+) = 7-cyano-7-deazaguanine + 2 NADPH + 3 H(+). It functions in the pathway tRNA modification; tRNA-queuosine biosynthesis. In terms of biological role, catalyzes the NADPH-dependent reduction of 7-cyano-7-deazaguanine (preQ0) to 7-aminomethyl-7-deazaguanine (preQ1). The chain is NADPH-dependent 7-cyano-7-deazaguanine reductase from Escherichia coli O127:H6 (strain E2348/69 / EPEC).